The sequence spans 529 residues: Ribonuclease Y (529 aa).

The chain crosses the membrane as a helical span at residues 4 to 24 (GLIYISLEVIVACLISALAMY). Residues 216-297 (FTNRIALPCS…NRIEEVYHRV (82 aa)) form the KH domain. The HD domain occupies 342–435 (ALQHSKEVAL…VCAADALSAG (94 aa)).

The protein belongs to the RNase Y family.

Its subcellular location is the cell membrane. Functionally, endoribonuclease that initiates mRNA decay. The chain is Ribonuclease Y from Helicobacter acinonychis (strain Sheeba).